We begin with the raw amino-acid sequence, 1198 residues long: MPSAVLEKPLNEINKSISTTANVHFINDPTLSEQFDTIQLSFELFIRVFPDTGSDDSNNMSENKFVLIKLLGAPDYFKEFKIYRVTSIDHSAPTSNSVIFINHSNLLKFDNQLTLNSCVIQSIDYSCIPTIESLFVSVPPNIYSTLHDKPSTSIREQFINTFLLNSGSVVGTGDIIRSINGEVKLSEPVSQGIVSNNTNIVLIKTVENNNDDIDYNEKEIEDQEVSEDDLDSEIHLDLSTYLSSSLQIDSPAVHSVKLKVEPLPAKMSVDMLPPIWLKEDTELFVFANTAELPKLGFPVFNGDSVKLNYNNDKMIVKLFTFIEPNKSFRRRTLYLSPILLANLKLSSNSEVTLEPIRQRDHPFTNFFPVAKSVTISRVSSHITMDKTYQQHFFSELKTTFHKNLKCVKRGDFVPVVIDTVLAKTMFDTNNLIQQQQQLQPGEEENAPDMGVIPTGDPDEVAWFKIVDISGESHENETNQFIIDPTKTRLISSGVEFIKLPPNDFTHWYQYLKLPPVFNFNKAIDSNPTCFKYVSEFKKIVTTSLNSRSKINLKTTILLNSMTRGLGKTTMVRSVSTELGLNLIELDCFDLINPGAELKTIGLLTGKIDKLIGAQENSTDTDSSYHVIYLKHIENLCAQSNQNEQGANITTSLSLKVIQTLNEYLNDYSNLMIIMSCNDLDKLNENLRSLIKFQIDFSVPDEKERLEVFKFLIENETHKLINSNNPEPFEDREEFEDQFDVSTVSFSRRHDISFSSLALQSAGLTPRDLMSIIKKAKRLAISRLMGLAKDSNISLEKLIKVGNGGLITWIPEDFNKAINDARNQFSDSIGAPRIPDVKWEDIGGLDLVKDEIMDTIDMPLKHPELFSNGLKKRSGILFYGPPGTGKTLLAKAIATNFSLNFFSVKGPELLNMYIGESEANVRRVFQKARDAKPCVIFFDELDSVAPKRGNQGDSGGVMDRIVSQLLAELDGMSGGAEGGGDGVFVVGATNRPDLLDEALLRPGRFDKMLYLGISDTDEKQSKILEALTRKFKLADNVDLYEIAKRCSFTFTGADFYALCSDSMLNAMTRTANEVDAKIKKLNEELTSQGKEEISTRWWFDNAATPEDIDVLVQMEDFKKAQSELAPSVSAEELEHYLRVRENFEGGKEKAMANGTTSAANGTSQGIPHEFMQKVEELIGDGIDGIVDENGNHIHASSDH.

879 to 886 (GPPGTGKT) serves as a coordination point for ATP.

This sequence belongs to the AAA ATPase family. Interacts with PEX1; forming the PEX1-PEX6 AAA ATPase complex, which is composed of a heterohexamer formed by a trimer of PEX1-PEX6 dimers.

The protein localises to the cytoplasm. It localises to the cytosol. Its subcellular location is the peroxisome membrane. It catalyses the reaction ATP + H2O = ADP + phosphate + H(+). Component of the PEX1-PEX6 AAA ATPase complex, a protein dislocase complex that mediates the ATP-dependent extraction of the PEX5 receptor from peroxisomal membranes, an essential step for PEX5 recycling. Specifically recognizes PEX5 monoubiquitinated at 'Cys-6', and pulls it out of the peroxisome lumen through the PEX2-PEX10-PEX12 retrotranslocation channel. Extraction by the PEX1-PEX6 AAA ATPase complex is accompanied by unfolding of the TPR repeats and release of bound cargo from PEX5. This Debaryomyces hansenii (strain ATCC 36239 / CBS 767 / BCRC 21394 / JCM 1990 / NBRC 0083 / IGC 2968) (Yeast) protein is Peroxisomal ATPase PEX6 (PEX6).